Consider the following 906-residue polypeptide: Protein translocase subunit SecA (906 aa).

ATP is bound by residues Gln87, 105-109 (GEGKT), and Asp507. Zn(2+) contacts are provided by Cys890, Cys892, Cys901, and His902.

It belongs to the SecA family. Monomer and homodimer. Part of the essential Sec protein translocation apparatus which comprises SecA, SecYEG and auxiliary proteins SecDF-YajC and YidC. Zn(2+) is required as a cofactor.

It is found in the cell inner membrane. The protein resides in the cytoplasm. It catalyses the reaction ATP + H2O + cellular proteinSide 1 = ADP + phosphate + cellular proteinSide 2.. Its function is as follows. Part of the Sec protein translocase complex. Interacts with the SecYEG preprotein conducting channel. Has a central role in coupling the hydrolysis of ATP to the transfer of proteins into and across the cell membrane, serving both as a receptor for the preprotein-SecB complex and as an ATP-driven molecular motor driving the stepwise translocation of polypeptide chains across the membrane. The sequence is that of Protein translocase subunit SecA from Laribacter hongkongensis (strain HLHK9).